Here is a 403-residue protein sequence, read N- to C-terminus: Acetylornithine aminotransferase (403 aa).

Residues 107–108 (GA) and phenylalanine 140 each bind pyridoxal 5'-phosphate. Residue arginine 143 coordinates N(2)-acetyl-L-ornithine. 225-228 (DEVQ) is a pyridoxal 5'-phosphate binding site. Lysine 254 carries the post-translational modification N6-(pyridoxal phosphate)lysine. Serine 282 provides a ligand contact to N(2)-acetyl-L-ornithine. Residue threonine 283 participates in pyridoxal 5'-phosphate binding.

Belongs to the class-III pyridoxal-phosphate-dependent aminotransferase family. ArgD subfamily. In terms of assembly, homodimer. Pyridoxal 5'-phosphate is required as a cofactor.

It localises to the cytoplasm. The catalysed reaction is N(2)-acetyl-L-ornithine + 2-oxoglutarate = N-acetyl-L-glutamate 5-semialdehyde + L-glutamate. The protein operates within amino-acid biosynthesis; L-arginine biosynthesis; N(2)-acetyl-L-ornithine from L-glutamate: step 4/4. This is Acetylornithine aminotransferase from Vibrio parahaemolyticus serotype O3:K6 (strain RIMD 2210633).